We begin with the raw amino-acid sequence, 291 residues long: Pirin-like protein (291 aa).

This sequence belongs to the pirin family.

It is found in the nucleus. The sequence is that of Pirin-like protein from Solanum lycopersicum (Tomato).